The following is a 652-amino-acid chain: NAD(P)H-quinone oxidoreductase subunit 5, chloroplastic (652 aa).

A run of 16 helical transmembrane segments spans residues 9–29, 40–60, 91–111, 124–144, 147–167, 188–208, 225–245, 258–278, 289–309, 327–347, 354–374, 395–415, 424–444, 482–502, 526–546, and 630–650; these read WLIP…LISF, YSFL…LILF, PLTA…LIYT, FFAY…SPNL, IYVF…FWFT, GLLL…FDVI, LAIF…AQFP, TPIS…FLVA, FLMD…ATIA, LGYM…FHLM, ALLF…VGFN, GNAF…ACFW, AFVH…LTSF, TLPL…GTPF, LFIA…AYLI, and ILMI…YYSL.

This sequence belongs to the complex I subunit 5 family. NDH is composed of at least 16 different subunits, 5 of which are encoded in the nucleus.

The protein localises to the plastid. The protein resides in the chloroplast thylakoid membrane. The enzyme catalyses a plastoquinone + NADH + (n+1) H(+)(in) = a plastoquinol + NAD(+) + n H(+)(out). The catalysed reaction is a plastoquinone + NADPH + (n+1) H(+)(in) = a plastoquinol + NADP(+) + n H(+)(out). In terms of biological role, NDH shuttles electrons from NAD(P)H:plastoquinone, via FMN and iron-sulfur (Fe-S) centers, to quinones in the photosynthetic chain and possibly in a chloroplast respiratory chain. The immediate electron acceptor for the enzyme in this species is believed to be plastoquinone. Couples the redox reaction to proton translocation, and thus conserves the redox energy in a proton gradient. The polypeptide is NAD(P)H-quinone oxidoreductase subunit 5, chloroplastic (ndhF) (Mesostigma viride (Green alga)).